We begin with the raw amino-acid sequence, 501 residues long: ATP synthase subunit alpha (501 aa).

169 to 176 lines the ATP pocket; sequence GDRQTGKT.

Belongs to the ATPase alpha/beta chains family. F-type ATPases have 2 components, CF(1) - the catalytic core - and CF(0) - the membrane proton channel. CF(1) has five subunits: alpha(3), beta(3), gamma(1), delta(1), epsilon(1). CF(0) has three main subunits: a(1), b(2) and c(9-12). The alpha and beta chains form an alternating ring which encloses part of the gamma chain. CF(1) is attached to CF(0) by a central stalk formed by the gamma and epsilon chains, while a peripheral stalk is formed by the delta and b chains.

The protein localises to the cell membrane. The catalysed reaction is ATP + H2O + 4 H(+)(in) = ADP + phosphate + 5 H(+)(out). Functionally, produces ATP from ADP in the presence of a proton gradient across the membrane. The alpha chain is a regulatory subunit. The chain is ATP synthase subunit alpha from Streptococcus pneumoniae serotype 2 (strain D39 / NCTC 7466).